Reading from the N-terminus, the 490-residue chain is Cobyric acid synthase (490 aa).

The GATase cobBQ-type domain occupies 251–444; that stretch reads GLTIAVIHLP…LHGIFANDAF (194 aa). Cysteine 329 functions as the Nucleophile in the catalytic mechanism. The active site involves histidine 436.

The protein belongs to the CobB/CobQ family. CobQ subfamily.

It functions in the pathway cofactor biosynthesis; adenosylcobalamin biosynthesis. Catalyzes amidations at positions B, D, E, and G on adenosylcobyrinic A,C-diamide. NH(2) groups are provided by glutamine, and one molecule of ATP is hydrogenolyzed for each amidation. This is Cobyric acid synthase from Roseiflexus castenholzii (strain DSM 13941 / HLO8).